Consider the following 125-residue polypeptide: Large ribosomal subunit protein bL12 (125 aa).

The disordered stretch occupies residues 95–125 (APKPIKEGVDKKTAEEAKKKLEEAGAKAELK).

This sequence belongs to the bacterial ribosomal protein bL12 family. As to quaternary structure, homodimer. Part of the ribosomal stalk of the 50S ribosomal subunit. Forms a multimeric L10(L12)X complex, where L10 forms an elongated spine to which 2 to 4 L12 dimers bind in a sequential fashion. Binds GTP-bound translation factors.

Functionally, forms part of the ribosomal stalk which helps the ribosome interact with GTP-bound translation factors. Is thus essential for accurate translation. This chain is Large ribosomal subunit protein bL12, found in Polynucleobacter necessarius subsp. necessarius (strain STIR1).